The chain runs to 251 residues: 5'-nucleotidase SurE (251 aa).

Aspartate 8, aspartate 9, serine 39, and asparagine 90 together coordinate a divalent metal cation.

The protein belongs to the SurE nucleotidase family. Requires a divalent metal cation as cofactor.

Its subcellular location is the cytoplasm. It carries out the reaction a ribonucleoside 5'-phosphate + H2O = a ribonucleoside + phosphate. Nucleotidase that shows phosphatase activity on nucleoside 5'-monophosphates. The polypeptide is 5'-nucleotidase SurE (Legionella pneumophila subsp. pneumophila (strain Philadelphia 1 / ATCC 33152 / DSM 7513)).